The sequence spans 75 residues: Small ribosomal subunit protein bS18 (75 aa).

It belongs to the bacterial ribosomal protein bS18 family. In terms of assembly, part of the 30S ribosomal subunit. Forms a tight heterodimer with protein bS6.

Binds as a heterodimer with protein bS6 to the central domain of the 16S rRNA, where it helps stabilize the platform of the 30S subunit. The chain is Small ribosomal subunit protein bS18 from Shewanella halifaxensis (strain HAW-EB4).